The sequence spans 301 residues: Sulfate adenylyltransferase subunit 2 (301 aa).

This sequence belongs to the PAPS reductase family. CysD subfamily. As to quaternary structure, heterodimer composed of CysD, the smaller subunit, and CysN.

The enzyme catalyses sulfate + ATP + H(+) = adenosine 5'-phosphosulfate + diphosphate. It functions in the pathway sulfur metabolism; hydrogen sulfide biosynthesis; sulfite from sulfate: step 1/3. Its function is as follows. With CysN forms the ATP sulfurylase (ATPS) that catalyzes the adenylation of sulfate producing adenosine 5'-phosphosulfate (APS) and diphosphate, the first enzymatic step in sulfur assimilation pathway. APS synthesis involves the formation of a high-energy phosphoric-sulfuric acid anhydride bond driven by GTP hydrolysis by CysN coupled to ATP hydrolysis by CysD. This chain is Sulfate adenylyltransferase subunit 2, found in Shewanella loihica (strain ATCC BAA-1088 / PV-4).